The chain runs to 57 residues: Alpha-conotoxin-like Sm1.2 (57 aa).

Positions 1–16 are cleaved as a signal peptide; that stretch reads MFTVFLLVVLATTVVS. Positions 17-42 are excised as a propeptide; the sequence is FPSDRESDGANDEARTDEPEEHGPDR. The segment at 17–46 is disordered; that stretch reads FPSDRESDGANDEARTDEPEEHGPDRNGCC. The segment covering 19-41 has biased composition (basic and acidic residues); the sequence is SDRESDGANDEARTDEPEEHGPD. Intrachain disulfides connect Cys-45-Cys-51 and Cys-46-Cys-56. Cys-56 is subject to Cysteine amide.

Belongs to the conotoxin A superfamily. As to expression, expressed by the venom duct.

Its subcellular location is the secreted. In terms of biological role, alpha-conotoxins act on postsynaptic membranes, they bind to the nicotinic acetylcholine receptors (nAChR) and thus inhibit them. This Conus stercusmuscarum (Fly-specked cone) protein is Alpha-conotoxin-like Sm1.2.